The chain runs to 240 residues: ATP synthase subunit a (240 aa).

6 consecutive transmembrane segments (helical) span residues 41–61, 92–112, 121–141, 152–172, 191–211, and 212–232; these read WLVMAFLFLVSKFTLGNLEII, FFPMIATFALYIAVANLIGLI, SINTTLALTLIVWATHHVIGF, FIGPMKWLVPLMLPIELISNF, VLLGILFGLAGMFFAPLPIMV, and LGVLVSLVQAMVFVLLTVVYF.

The protein belongs to the ATPase A chain family. As to quaternary structure, F-type ATPases have 2 components, CF(1) - the catalytic core - and CF(0) - the membrane proton channel. CF(1) has five subunits: alpha(3), beta(3), gamma(1), delta(1), epsilon(1). CF(0) has three main subunits: a(1), b(2) and c(9-12). The alpha and beta chains form an alternating ring which encloses part of the gamma chain. CF(1) is attached to CF(0) by a central stalk formed by the gamma and epsilon chains, while a peripheral stalk is formed by the delta and b chains.

The protein resides in the cell inner membrane. Functionally, key component of the proton channel; it plays a direct role in the translocation of protons across the membrane. This chain is ATP synthase subunit a, found in Desulfotalea psychrophila (strain LSv54 / DSM 12343).